The following is a 270-amino-acid chain: Regulatory protein RecX (270 aa).

This sequence belongs to the RecX family.

Its subcellular location is the cytoplasm. Functionally, modulates RecA activity. The protein is Regulatory protein RecX of Bacillus anthracis (strain A0248).